Here is a 227-residue protein sequence, read N- to C-terminus: Uracil-DNA glycosylase (227 aa).

Aspartate 65 functions as the Proton acceptor in the catalytic mechanism.

This sequence belongs to the uracil-DNA glycosylase (UDG) superfamily. UNG family.

Its subcellular location is the cytoplasm. It catalyses the reaction Hydrolyzes single-stranded DNA or mismatched double-stranded DNA and polynucleotides, releasing free uracil.. Its function is as follows. Excises uracil residues from the DNA which can arise as a result of misincorporation of dUMP residues by DNA polymerase or due to deamination of cytosine. The polypeptide is Uracil-DNA glycosylase (Lactobacillus delbrueckii subsp. bulgaricus (strain ATCC BAA-365 / Lb-18)).